The sequence spans 276 residues: Large ribosomal subunit protein uL2 (276 aa).

Positions 223 to 276 (VVMNPVDHPHGGGEGKSSGGRHPVSPWGKKTRGPKTRNNKVTDRLIIRRRNAKR) are disordered. Positions 251–260 (KKTRGPKTRN) are enriched in basic residues.

It belongs to the universal ribosomal protein uL2 family. In terms of assembly, part of the 50S ribosomal subunit. Forms a bridge to the 30S subunit in the 70S ribosome.

Its function is as follows. One of the primary rRNA binding proteins. Required for association of the 30S and 50S subunits to form the 70S ribosome, for tRNA binding and peptide bond formation. It has been suggested to have peptidyltransferase activity; this is somewhat controversial. Makes several contacts with the 16S rRNA in the 70S ribosome. This chain is Large ribosomal subunit protein uL2, found in Hyphomonas neptunium (strain ATCC 15444).